The chain runs to 223 residues: Global nitrogen regulator (223 aa).

The HTH crp-type domain occupies 143–216 (RDMGSRLVSF…KKKITVHKPV (74 aa)). The H-T-H motif DNA-binding region spans 176 to 195 (HQAIAEAIGSTRVTVTRLLG).

In terms of biological role, required for full expression of proteins subject to ammonium repression. Transcriptional activator of genes subject to nitrogen control. Functionally, has affinity for the xisA upstream region. Binds to a 66 bp region containing three repeats of the consensus recognition sequence 5'-ACATT-3'. The chain is Global nitrogen regulator (ntcA) from Nostoc sp. (strain PCC 7120 / SAG 25.82 / UTEX 2576).